A 286-amino-acid polypeptide reads, in one-letter code: Phosphatidylglycerol--prolipoprotein diacylglyceryl transferase (286 aa).

7 helical membrane passes run 29–49 (IHWY…VGTY), 66–86 (LVFY…VFFY), 101–121 (VWEG…AMML), 130–150 (FLDL…LGRI), 181–201 (PSQL…LFWF), 209–229 (AAVA…VEFV), and 250–270 (LSLP…RHPA). Arg149 contacts a 1,2-diacyl-sn-glycero-3-phospho-(1'-sn-glycerol).

This sequence belongs to the Lgt family.

It localises to the cell inner membrane. The catalysed reaction is L-cysteinyl-[prolipoprotein] + a 1,2-diacyl-sn-glycero-3-phospho-(1'-sn-glycerol) = an S-1,2-diacyl-sn-glyceryl-L-cysteinyl-[prolipoprotein] + sn-glycerol 1-phosphate + H(+). It functions in the pathway protein modification; lipoprotein biosynthesis (diacylglyceryl transfer). Catalyzes the transfer of the diacylglyceryl group from phosphatidylglycerol to the sulfhydryl group of the N-terminal cysteine of a prolipoprotein, the first step in the formation of mature lipoproteins. The polypeptide is Phosphatidylglycerol--prolipoprotein diacylglyceryl transferase (Teredinibacter turnerae (strain ATCC 39867 / T7901)).